The primary structure comprises 236 residues: Mitochondrial-abundant heat soluble protein (236 aa).

The N-terminal 73 residues, 1–73, are a transit peptide targeting the mitochondrion; that stretch reads MSRYLLRDVQ…AARAGVVLRG (73 aa). Disordered stretches follow at residues 102-135 and 165-209; these read RIHS…NEAA and RSNG…EIVA. Composition is skewed to polar residues over residues 105–126 and 192–202; these read SQSS…NSPQ and APDSSKNTKSV. The MAHS motif motif lies at 126–143; the sequence is QPEGKANEAAERAKQFMN.

It localises to the mitochondrion. Mitochondrial heat soluble protein acting as a molecular shield in water-deficient condition. This chain is Mitochondrial-abundant heat soluble protein, found in Ramazzottius varieornatus (Water bear).